A 509-amino-acid chain; its full sequence is Probable aspartic-type endopeptidase CTSD (509 aa).

An N-terminal signal peptide occupies residues 1-21; sequence MQFLWLCLLSAVTLQFTGTLA. A Peptidase A1 domain is found at 102 to 408; it reads YFSEVKVGSE…DFDKNRVGLA (307 aa). Residue D120 is part of the active site. N174 carries N-linked (GlcNAc...) asparagine glycosylation. The active site involves D302. N361 carries N-linked (GlcNAc...) asparagine glycosylation. Positions 451–489 are disordered; the sequence is NKAPSGGSPGLPAESGSDSTTNGEATNGATSSPNSSSSV. A compositionally biased stretch (polar residues) spans 466–480; sequence GSDSTTNGEATNGAT. N484 carries an N-linked (GlcNAc...) asparagine glycan. S485 carries GPI-anchor amidated serine lipidation. The propeptide at 486-509 is removed in mature form; the sequence is SSSVLTPTWLTLAVFFAIGSSLWS.

It belongs to the peptidase A1 family.

Its subcellular location is the cell membrane. Probable GPI-anchored aspartic-type endopeptidase which contributes to virulence. The polypeptide is Probable aspartic-type endopeptidase CTSD (CTSD) (Trichophyton verrucosum (strain HKI 0517)).